The chain runs to 160 residues: Globin CTT-Y (160 aa).

An N-terminal signal peptide occupies residues 1 to 16 (MKVLAIFALCIIGALA). The 144-residue stretch at 17–160 (TPCDDFKIMQ…IRKVINANLE (144 aa)) folds into the Globin domain. Positions 74 and 109 each coordinate heme b.

This sequence belongs to the globin family.

The chain is Globin CTT-Y (CTT-Y) from Chironomus thummi piger (Midge).